The chain runs to 152 residues: Ribosome maturation factor RimP (152 aa).

Belongs to the RimP family.

The protein localises to the cytoplasm. Functionally, required for maturation of 30S ribosomal subunits. The chain is Ribosome maturation factor RimP from Shigella boydii serotype 4 (strain Sb227).